The following is a 298-amino-acid chain: Tyrosine recombinase XerD (298 aa).

A Core-binding (CB) domain is found at 3 to 88; it reads ALDHPLIDQF…GLRGFFRYLL (86 aa). A Tyr recombinase domain is found at 109–292; it reads PLPKSLSEAD…AKARLQQLHA (184 aa). Residues arginine 149, lysine 173, histidine 244, arginine 247, and histidine 270 contribute to the active site. The active-site O-(3'-phospho-DNA)-tyrosine intermediate is the tyrosine 279.

The protein belongs to the 'phage' integrase family. XerD subfamily. As to quaternary structure, forms a cyclic heterotetrameric complex composed of two molecules of XerC and two molecules of XerD.

It localises to the cytoplasm. In terms of biological role, site-specific tyrosine recombinase, which acts by catalyzing the cutting and rejoining of the recombining DNA molecules. The XerC-XerD complex is essential to convert dimers of the bacterial chromosome into monomers to permit their segregation at cell division. It also contributes to the segregational stability of plasmids. The sequence is that of Tyrosine recombinase XerD from Pseudomonas putida (strain ATCC 47054 / DSM 6125 / CFBP 8728 / NCIMB 11950 / KT2440).